The sequence spans 186 residues: ATP synthase subunit delta (186 aa).

The protein belongs to the ATPase delta chain family. As to quaternary structure, F-type ATPases have 2 components, F(1) - the catalytic core - and F(0) - the membrane proton channel. F(1) has five subunits: alpha(3), beta(3), gamma(1), delta(1), epsilon(1). F(0) has three main subunits: a(1), b(2) and c(10-14). The alpha and beta chains form an alternating ring which encloses part of the gamma chain. F(1) is attached to F(0) by a central stalk formed by the gamma and epsilon chains, while a peripheral stalk is formed by the delta and b chains.

The protein localises to the cell inner membrane. Functionally, f(1)F(0) ATP synthase produces ATP from ADP in the presence of a proton or sodium gradient. F-type ATPases consist of two structural domains, F(1) containing the extramembraneous catalytic core and F(0) containing the membrane proton channel, linked together by a central stalk and a peripheral stalk. During catalysis, ATP synthesis in the catalytic domain of F(1) is coupled via a rotary mechanism of the central stalk subunits to proton translocation. In terms of biological role, this protein is part of the stalk that links CF(0) to CF(1). It either transmits conformational changes from CF(0) to CF(1) or is implicated in proton conduction. The protein is ATP synthase subunit delta of Bacteroides fragilis (strain ATCC 25285 / DSM 2151 / CCUG 4856 / JCM 11019 / LMG 10263 / NCTC 9343 / Onslow / VPI 2553 / EN-2).